Here is a 768-residue protein sequence, read N- to C-terminus: Actin filament-associated protein 1-like 1 (768 aa).

The segment at 82–145 (DLRDMPEDDG…GKSPEYISSH (64 aa)) is disordered. Phosphoserine occurs at positions 94, 98, 104, and 153. Residues 173-211 (GELKSSYNDSDAMSSSYESYDEEEEEGKSPQPRHQWPSE) form a disordered region. Positions 177 to 190 (SSYNDSDAMSSSYE) are enriched in low complexity. The PH 1 domain occupies 220–316 (ECRICAFLLR…WLKVIREVSK (97 aa)). Phosphoserine is present on residues Ser329 and Ser343. A PH 2 domain is found at 418–512 (EVPCCGYLNV…WLGLLLVEMG (95 aa)). At Tyr557 the chain carries Phosphotyrosine. The tract at residues 566 to 604 (QDEEPERPTGAQVKRHASSCSEKSHRVDPQVKVKRHASS) is disordered. Basic and acidic residues predominate over residues 587–596 (EKSHRVDPQV). Positions 611-700 (GKNRAEEDAR…VAVKERLQQS (90 aa)) form a coiled coil. The segment at 705–768 (PALGLSVSSK…KAKEWEMKKT (64 aa)) is disordered. A compositionally biased stretch (polar residues) spans 710 to 729 (SVSSKPKSGETANKPQNSVP). Ser747 is modified (phosphoserine). Positions 759–768 (KAKEWEMKKT) are enriched in basic and acidic residues.

As to quaternary structure, interacts with CTTN. As to expression, expressed in breast, colon and brain. In all 3 tissues, expressed in the microvasculature (at protein level). In addition, in the breast, found in the contractile myoepithelial cell layer which surrounds the breast ducts (at protein level). In the colon, expressed in the mucous membrane and colonic crypts and in the smooth muscle cell layer which provide movement of the colon (at protein level). In the cerebellum, localized around the Purkinje neurons and the granule cells of the granular layer, but not inside cell bodies (at protein level). Outside of the cerebellar cortex, expressed in glial cells (at protein level). Highly expressed away from the cell bodies within the dentate nucleus (at protein level).

It localises to the cytoplasm. It is found in the cell projection. The protein resides in the podosome. Its subcellular location is the invadopodium. The protein localises to the cytoskeleton. It localises to the stress fiber. Its function is as follows. May be involved in podosome and invadosome formation. In Homo sapiens (Human), this protein is Actin filament-associated protein 1-like 1 (AFAP1L1).